The sequence spans 363 residues: Caffeic acid 3-O-methyltransferase (363 aa).

130–136 contacts substrate; sequence MNQDKVL. The segment at 162 to 180 is substrate binding; the sequence is AFEYHGKDPRFNKVFNQGM. The S-adenosyl-L-methionine site is built by Gly208, Asp231, Asp251, Met252, and Lys265. The active-site Proton acceptor is the His269.

This sequence belongs to the class I-like SAM-binding methyltransferase superfamily. Cation-independent O-methyltransferase family. COMT subfamily. Homodimer.

It carries out the reaction (E)-caffeate + S-adenosyl-L-methionine = (E)-ferulate + S-adenosyl-L-homocysteine + H(+). Its pathway is aromatic compound metabolism; phenylpropanoid biosynthesis. Functionally, catalyzes the conversion of caffeic acid to ferulic acid and of 5-hydroxyferulic acid to sinapic acid. The resulting products may subsequently be converted to the corresponding alcohols that are incorporated into lignins. The polypeptide is Caffeic acid 3-O-methyltransferase (COMT1) (Catharanthus roseus (Madagascar periwinkle)).